We begin with the raw amino-acid sequence, 161 residues long: UPF0178 protein BruAb1_1955 (161 aa).

Belongs to the UPF0178 family.

This chain is UPF0178 protein BruAb1_1955, found in Brucella abortus biovar 1 (strain 9-941).